Reading from the N-terminus, the 337-residue chain is Inner membrane protein YhjD (337 aa).

Basic and acidic residues predominate over residues 1–29 (MTQENEIKRPIQDLEHEPIKPLDNSEKGS). The disordered stretch occupies residues 1-31 (MTQENEIKRPIQDLEHEPIKPLDNSEKGSKV). The Cytoplasmic segment spans residues 1 to 74 (MTQENEIKRP…LGNQFGAAIT (74 aa)). The chain crosses the membrane as a helical span at residues 75–97 (YFSFLSMIPILMVSFAAGGFVLA). Topologically, residues 98-133 (SHPMLLQDIFDKILQNISDPTLAATLKNTINTAVQQ) are periplasmic. The helical transmembrane segment at 134–156 (RTTVGLVGLAVALYSGINWMGNL) threads the bilayer. Over 157-185 (REAIRAQSRDVWERSPQDQEKFWVKYLRD) the chain is Cytoplasmic. Residues 186 to 208 (FISLIGLLIALIVTLSITSVAGS) traverse the membrane as a helical segment. Residues 209–227 (AQQMIISALHLNSIEWLKP) lie on the Periplasmic side of the membrane. The chain crosses the membrane as a helical span at residues 228–250 (TWRLIGLAISIFANYLLFFWIFW). Residues 251-261 (RLPRHRPRKKA) are Cytoplasmic-facing. A helical transmembrane segment spans residues 262 to 284 (LIRGTFLAAIGFEVIKIVMTYTL). The Periplasmic portion of the chain corresponds to 285–298 (PSLMKSPSGAAFGS). A helical membrane pass occupies residues 299-321 (VLGLMAFFYFFARLTLFCAAWIA). At 322-337 (TAEYKDDPRMPGKTQP) the chain is on the cytoplasmic side.

Its subcellular location is the cell inner membrane. The polypeptide is Inner membrane protein YhjD (yhjD) (Escherichia coli (strain K12)).